The following is a 359-amino-acid chain: Cytoplasmic tRNA 2-thiolation protein 1 (359 aa).

This sequence belongs to the TtcA family. CTU1/NCS6/ATPBD3 subfamily. In terms of assembly, interacts with NCS2 and URM1. May act by forming a heterodimer with NCS2. Component of a large molecular weight complex of more than 250 kDa.

Its subcellular location is the cytoplasm. The protein localises to the mitochondrion. It functions in the pathway tRNA modification; 5-methoxycarbonylmethyl-2-thiouridine-tRNA biosynthesis. Its function is as follows. Plays a central role in 2-thiolation of mcm(5)S(2)U at tRNA wobble positions of tRNA(Lys), tRNA(Glu) and tRNA(Gln). Directly binds tRNAs and probably acts by catalyzing adenylation of tRNAs, an intermediate required for 2-thiolation. It is unclear whether it acts as a sulfurtransferase that transfers sulfur from thiocarboxylated URM1 onto the uridine of tRNAs at wobble position. Prior mcm(5) tRNA modification by the elongator complex is required for 2-thiolation. May also be involved in protein urmylation. The sequence is that of Cytoplasmic tRNA 2-thiolation protein 1 from Saccharomyces cerevisiae (strain RM11-1a) (Baker's yeast).